Here is a 358-residue protein sequence, read N- to C-terminus: Peptide chain release factor 1 (358 aa).

Gln-233 bears the N5-methylglutamine mark.

Belongs to the prokaryotic/mitochondrial release factor family. Methylated by PrmC. Methylation increases the termination efficiency of RF1.

The protein localises to the cytoplasm. In terms of biological role, peptide chain release factor 1 directs the termination of translation in response to the peptide chain termination codons UAG and UAA. The chain is Peptide chain release factor 1 from Macrococcus caseolyticus (strain JCSC5402) (Macrococcoides caseolyticum).